Here is an 82-residue protein sequence, read N- to C-terminus: uncharacterized protein (82 aa).

This is an uncharacterized protein from Treponema pallidum (strain Nichols).